The chain runs to 329 residues: Cathepsin K (329 aa).

The N-terminal stretch at 1 to 15 (MWVFKFLLLPVVSFA) is a signal peptide. The propeptide at 16–114 (LSPEETLDTQ…TLYTPEWEGR (99 aa)) is activation peptide. Asn103 is a glycosylation site (N-linked (GlcNAc...) asparagine). 2 cysteine pairs are disulfide-bonded: Cys136-Cys177 and Cys170-Cys210. The active site involves Cys139. A glycan (N-linked (GlcNAc...) asparagine) is linked at Asn213. The cysteines at positions 269 and 318 are disulfide-linked. Active-site residues include His276 and Asn296.

Belongs to the peptidase C1 family.

The protein resides in the lysosome. The protein localises to the secreted. It is found in the apical cell membrane. It carries out the reaction Broad proteolytic activity. With small-molecule substrates and inhibitors, the major determinant of specificity is P2, which is preferably Leu, Met &gt; Phe, and not Arg.. Functionally, thiol protease involved in osteoclastic bone resorption and may participate partially in the disorder of bone remodeling. Displays potent endoprotease activity against fibrinogen at acid pH. May play an important role in extracellular matrix degradation. Involved in the release of thyroid hormone thyroxine (T4) by limited proteolysis of TG/thyroglobulin in the thyroid follicle lumen. The polypeptide is Cathepsin K (Ctsk) (Rattus norvegicus (Rat)).